Consider the following 218-residue polypeptide: Capsid protein (218 aa).

Methionine 1 carries the post-translational modification N-acetylmethionine; by host. Residues 1–28 (MDKSESTSAGRNRRRRPRRGSRSAPSSA) are disordered. Residues 11–21 (RNRRRRPRRGS) show a composition bias toward basic residues.

Belongs to the cucumovirus capsid protein family.

It is found in the virion. Functionally, capsid protein. Probably binds RNA and plays a role in packaging. The sequence is that of Capsid protein from Cucumis sativus (Cucumber).